A 284-amino-acid chain; its full sequence is uncharacterized protein (284 aa).

This sequence belongs to the IIV-6 436R family.

This is an uncharacterized protein from Invertebrate iridescent virus 3 (IIV-3).